The sequence spans 152 residues: Small ribosomal subunit protein uS19x (152 aa).

It belongs to the universal ribosomal protein uS19 family.

Its subcellular location is the cytoplasm. This is Small ribosomal subunit protein uS19x (RPS15D) from Arabidopsis thaliana (Mouse-ear cress).